The primary structure comprises 111 residues: UPF0145 protein BTH_I2656 (111 aa).

The protein belongs to the UPF0145 family.

The sequence is that of UPF0145 protein BTH_I2656 from Burkholderia thailandensis (strain ATCC 700388 / DSM 13276 / CCUG 48851 / CIP 106301 / E264).